A 177-amino-acid polypeptide reads, in one-letter code: Protein LIGHT-DEPENDENT SHORT HYPOCOTYLS 10 (177 aa).

The span at 1 to 10 (MSSPRERGKS) shows a compositional bias: basic and acidic residues. Disordered regions lie at residues 1-31 (MSSP…SQKR) and 144-177 (RGIP…FSFS). One can recognise an ALOG domain in the interval 25 to 152 (RYESQKRRDW…ARGIPYKKKK (128 aa)). The short motif at 150 to 154 (KKKKK) is the Nuclear localization signal element. Residues 168-177 (SSSSSSFSFS) are compositionally biased toward low complexity.

Belongs to the plant homeotic and developmental regulators ALOG protein family.

It is found in the nucleus. Probable transcription regulator that acts as a developmental regulator by promoting cell growth in response to light. The protein is Protein LIGHT-DEPENDENT SHORT HYPOCOTYLS 10 (LSH10) of Arabidopsis thaliana (Mouse-ear cress).